A 153-amino-acid polypeptide reads, in one-letter code: Bacteriohemerythrin (153 aa).

Residues His-21, His-57, Glu-61, His-76, His-80, His-115, and Asp-120 each contribute to the Fe cation site.

The protein belongs to the hemerythrin family. In terms of assembly, monomer.

Its function is as follows. Oxygen-binding protein. May be involved in a storage mechanism or for delivery to oxygen-requiring enzymes. The oxygen-binding site contains two iron atoms. This is Bacteriohemerythrin from Pseudomonas paraeruginosa (strain DSM 24068 / PA7) (Pseudomonas aeruginosa (strain PA7)).